We begin with the raw amino-acid sequence, 245 residues long: Myelin protein P0 (245 aa).

The first 28 residues, Met-1–Ala-28, serve as a signal peptide directing secretion. In terms of domain architecture, Ig-like V-type spans Ile-29–Gln-143. Residues Ile-29–Gly-153 lie on the Extracellular side of the membrane. Residues Cys-49 and Cys-125 are joined by a disulfide bond. Asn-120 carries N-linked (GlcNAc...) asparagine glycosylation. Residues Leu-154–Ile-174 form a helical membrane-spanning segment. Residues Leu-175 to Lys-245 lie on the Cytoplasmic side of the membrane. 2 stretches are compositionally biased toward basic and acidic residues: residues Lys-199 to Lys-208 and Thr-224 to Lys-245. The disordered stretch occupies residues Lys-199–Lys-245.

It belongs to the myelin P0 protein family.

It is found in the cell membrane. Its function is as follows. Creation of an extracellular membrane face which guides the wrapping process and ultimately compacts adjacent lamellae. In Xenopus laevis (African clawed frog), this protein is Myelin protein P0 (mpz).